A 601-amino-acid chain; its full sequence is Jacalin-related lectin 3 (601 aa).

3 Jacalin-type lectin domains span residues 13–155, 240–382, and 438–583; these read PASL…HTQP, AKTY…HVME, and PSGP…HMQH.

It belongs to the jacalin lectin family.

This chain is Jacalin-related lectin 3 (JAL3), found in Arabidopsis thaliana (Mouse-ear cress).